Here is a 367-residue protein sequence, read N- to C-terminus: UDP-N-acetylglucosamine--N-acetylmuramyl-(pentapeptide) pyrophosphoryl-undecaprenol N-acetylglucosamine transferase (367 aa).

Residues 15–17 (TGG), N127, R163, S191, I249, and Q294 each bind UDP-N-acetyl-alpha-D-glucosamine.

It belongs to the glycosyltransferase 28 family. MurG subfamily.

It is found in the cell inner membrane. It carries out the reaction di-trans,octa-cis-undecaprenyl diphospho-N-acetyl-alpha-D-muramoyl-L-alanyl-D-glutamyl-meso-2,6-diaminopimeloyl-D-alanyl-D-alanine + UDP-N-acetyl-alpha-D-glucosamine = di-trans,octa-cis-undecaprenyl diphospho-[N-acetyl-alpha-D-glucosaminyl-(1-&gt;4)]-N-acetyl-alpha-D-muramoyl-L-alanyl-D-glutamyl-meso-2,6-diaminopimeloyl-D-alanyl-D-alanine + UDP + H(+). It participates in cell wall biogenesis; peptidoglycan biosynthesis. Cell wall formation. Catalyzes the transfer of a GlcNAc subunit on undecaprenyl-pyrophosphoryl-MurNAc-pentapeptide (lipid intermediate I) to form undecaprenyl-pyrophosphoryl-MurNAc-(pentapeptide)GlcNAc (lipid intermediate II). The polypeptide is UDP-N-acetylglucosamine--N-acetylmuramyl-(pentapeptide) pyrophosphoryl-undecaprenol N-acetylglucosamine transferase (Burkholderia orbicola (strain MC0-3)).